The chain runs to 346 residues: Phosphate acyltransferase (346 aa).

It belongs to the PlsX family. In terms of assembly, homodimer. Probably interacts with PlsY.

The protein localises to the cytoplasm. It catalyses the reaction a fatty acyl-[ACP] + phosphate = an acyl phosphate + holo-[ACP]. It participates in lipid metabolism; phospholipid metabolism. Functionally, catalyzes the reversible formation of acyl-phosphate (acyl-PO(4)) from acyl-[acyl-carrier-protein] (acyl-ACP). This enzyme utilizes acyl-ACP as fatty acyl donor, but not acyl-CoA. In Crocosphaera subtropica (strain ATCC 51142 / BH68) (Cyanothece sp. (strain ATCC 51142)), this protein is Phosphate acyltransferase.